Reading from the N-terminus, the 241-residue chain is 1-(5-phosphoribosyl)-5-[(5-phosphoribosylamino)methylideneamino] imidazole-4-carboxamide isomerase (241 aa).

D10 (proton acceptor) is an active-site residue. D129 acts as the Proton donor in catalysis.

The protein belongs to the HisA/HisF family.

The protein resides in the cytoplasm. It catalyses the reaction 1-(5-phospho-beta-D-ribosyl)-5-[(5-phospho-beta-D-ribosylamino)methylideneamino]imidazole-4-carboxamide = 5-[(5-phospho-1-deoxy-D-ribulos-1-ylimino)methylamino]-1-(5-phospho-beta-D-ribosyl)imidazole-4-carboxamide. Its pathway is amino-acid biosynthesis; L-histidine biosynthesis; L-histidine from 5-phospho-alpha-D-ribose 1-diphosphate: step 4/9. In Salinispora tropica (strain ATCC BAA-916 / DSM 44818 / JCM 13857 / NBRC 105044 / CNB-440), this protein is 1-(5-phosphoribosyl)-5-[(5-phosphoribosylamino)methylideneamino] imidazole-4-carboxamide isomerase.